We begin with the raw amino-acid sequence, 490 residues long: Betaine aldehyde dehydrogenase (490 aa).

3 residues coordinate K(+): S26, I27, and D93. 150-152 (GAW) lines the NAD(+) pocket. Catalysis depends on K162, which acts as the Charge relay system. NAD(+)-binding positions include 176 to 179 (KPSE) and 230 to 233 (GVET). L246 is a binding site for K(+). The Proton acceptor role is filled by E252. G254, C286, and E387 together coordinate NAD(+). C286 acts as the Nucleophile in catalysis. C286 is subject to Cysteine sulfenic acid (-SOH). K457 and G460 together coordinate K(+). The Charge relay system role is filled by E464.

This sequence belongs to the aldehyde dehydrogenase family. In terms of assembly, dimer of dimers. Requires K(+) as cofactor.

It catalyses the reaction betaine aldehyde + NAD(+) + H2O = glycine betaine + NADH + 2 H(+). It functions in the pathway amine and polyamine biosynthesis; betaine biosynthesis via choline pathway; betaine from betaine aldehyde: step 1/1. Functionally, involved in the biosynthesis of the osmoprotectant glycine betaine. Catalyzes the irreversible oxidation of betaine aldehyde to the corresponding acid. This is Betaine aldehyde dehydrogenase from Acinetobacter baumannii (strain SDF).